Reading from the N-terminus, the 570-residue chain is Frizzled-2 (570 aa).

An N-terminal signal peptide occupies residues 1 to 28; it reads MRARSALPRSALPRLLLPLLLLPAAGPA. Residues 29 to 252 lie on the Extracellular side of the membrane; it reads QFHGEKGISI…QEETRFARLW (224 aa). Residues 39 to 158 enclose the FZ domain; it reads PDHGFCQPIS…HGAEQICVGQ (120 aa). Intrachain disulfides connect cysteine 44-cysteine 105, cysteine 52-cysteine 98, cysteine 89-cysteine 126, cysteine 115-cysteine 155, and cysteine 119-cysteine 143. N-linked (GlcNAc...) asparagine glycosylation is present at asparagine 58. The N-linked (GlcNAc...) asparagine glycan is linked to asparagine 159. The disordered stretch occupies residues 166-194; that stretch reads PALLTTAPPSGLQPGAGGTPGGPGGGGSP. A compositionally biased stretch (gly residues) spans 179–193; the sequence is PGAGGTPGGPGGGGS. A helical transmembrane segment spans residues 253-273; sequence ILTWSVLCCASTFFTVTTYLV. At 274–284 the chain is on the cytoplasmic side; that stretch reads DMQRFRYPERP. Residues 285–305 form a helical membrane-spanning segment; that stretch reads IIFLSGCYTMVSVAYIAGFVL. The Extracellular portion of the chain corresponds to 306–332; the sequence is QERVVCNERFSEDGYRTVVQGTKKEGC. Residues 333–353 traverse the membrane as a helical segment; sequence TILFMMLYFFSMASSIWWVIL. At 354-375 the chain is on the cytoplasmic side; the sequence is SLTWFLAAGMKWGHEAIEANSQ. A helical transmembrane segment spans residues 376 to 396; the sequence is YFHLAAWAVPAVKTITILAMG. Residues 397–419 are Extracellular-facing; sequence QIDGDLLSGVCFVGLNSLDPLRG. The helical transmembrane segment at 420-440 threads the bilayer; it reads FVLAPLFVYLFIGTSFLLAGF. Over 441–466 the chain is Cytoplasmic; sequence VSLFRIRTIMKHDGTKTEKLERLMVR. Residues 467 to 487 form a helical membrane-spanning segment; sequence IGVFSVLYTVPATIVIACYFY. Topologically, residues 488-524 are extracellular; it reads EQAFREHWERSWVSQHCKSLAIPCPAHYTPRMSPDFT. The helical transmembrane segment at 525–545 threads the bilayer; that stretch reads VYMIKYLMTLIVGITSGFWIW. Residues 546 to 570 are Cytoplasmic-facing; it reads SGKTLHSWRKFYTRLTNSRHGETTV. The Lys-Thr-X-X-X-Trp motif, mediates interaction with the PDZ domain of Dvl family members signature appears at 548–553; that stretch reads KTLHSW. The PDZ-binding signature appears at 568-570; that stretch reads TTV.

Belongs to the G-protein coupled receptor Fz/Smo family. In terms of processing, ubiquitinated by ZNRF3, leading to its degradation by the proteasome. In terms of tissue distribution, expressed in embryonic and adult heart, lung, chondrocytes and brain. Also expressed in the developing gastrointestinal tract (strongest in foregut), much weaker expression in the adult. No expression in fetal liver and adult spleen. Up-regulated in esophageal squamous cell carcinomas.

The protein localises to the membrane. It localises to the cell membrane. In terms of biological role, receptor for Wnt proteins. Most of frizzled receptors are coupled to the beta-catenin canonical signaling pathway, which leads to the activation of disheveled proteins, inhibition of GSK-3 kinase, nuclear accumulation of beta-catenin and activation of Wnt target genes. A second signaling pathway involving PKC and calcium fluxes has been seen for some family members, but it is not yet clear if it represents a distinct pathway or if it can be integrated in the canonical pathway, as PKC seems to be required for Wnt-mediated inactivation of GSK-3 kinase. Both pathways seem to involve interactions with G-proteins. May be involved in transduction and intercellular transmission of polarity information during tissue morphogenesis and/or in differentiated tissues. The protein is Frizzled-2 (Fzd2) of Mus musculus (Mouse).